A 376-amino-acid chain; its full sequence is Chaperone protein DnaJ (376 aa).

Residues 5-70 (DYYEVLGVGR…DKKAAYDQFG (66 aa)) form the J domain. Residues 132-210 (GLTKELRIPT…CHGEGRVEKS (79 aa)) form a CR-type zinc finger. Residues Cys145, Cys148, Cys162, Cys165, Cys184, Cys187, Cys198, and Cys201 each coordinate Zn(2+). CXXCXGXG motif repeat units follow at residues 145–152 (CDSCDGSG), 162–169 (CGTCHGQG), 184–191 (CPTCHGRG), and 198–205 (CNKCHGEG).

This sequence belongs to the DnaJ family. In terms of assembly, homodimer. Zn(2+) serves as cofactor.

It localises to the cytoplasm. Functionally, participates actively in the response to hyperosmotic and heat shock by preventing the aggregation of stress-denatured proteins and by disaggregating proteins, also in an autonomous, DnaK-independent fashion. Unfolded proteins bind initially to DnaJ; upon interaction with the DnaJ-bound protein, DnaK hydrolyzes its bound ATP, resulting in the formation of a stable complex. GrpE releases ADP from DnaK; ATP binding to DnaK triggers the release of the substrate protein, thus completing the reaction cycle. Several rounds of ATP-dependent interactions between DnaJ, DnaK and GrpE are required for fully efficient folding. Also involved, together with DnaK and GrpE, in the DNA replication of plasmids through activation of initiation proteins. The protein is Chaperone protein DnaJ of Shewanella pealeana (strain ATCC 700345 / ANG-SQ1).